Reading from the N-terminus, the 616-residue chain is METVDTSQRLACLRELMKERKVDVYLVPSEDSHQSEYIAPCDGRREFISGFSGSAGCAIVSMTKAALSTDGRYFNQASKQLDNNWLLLKRGIESMPTWQEWTAEQLEGGKVVGVDPSLITASDARSLSETIKKSGGSLLGLQENLVDLVWGKDRPSRPSKKVTVHPVEFAGKSFEEKITDLRKELEKKKSAGFVVSMLDEIAWLFNLRGNDIPYNPVFFAYAIITPSTADLYIDEDKLSADVKKHLGDKVSLKPYTSIFEDAKALGQSAQAEVNGGASDPPRKFFISTKASWSLSLALGGENKVEEVRSPISDAKAIKNDAELEGMRACHIRDGAALTKYFAWLENELLNKKTVLNEVEASDKLEEIRSKQKNFVGLSFDTISSSGPNAAVIHYKAERNNCSIIDPEAVYLCDSGAQYLDGTTDTTRTLHFGEPTEKERKAYTLVLKGMIAIDTAIFPKGTTGFSLDTFARQFLWKEGLDYLHGTGHGVGSYLNVHEGPIGIGTRVQYSEVPISAGNVISDEPGFYEDGNFGIRIENIIMAREVKTTFSFGERPWLGFEHVTMTPLCRKLTDPSLLSDAEKIWINEYHNEVWEKTSGYFEEDELTRNWLKRETQPI.

Mn(2+) contacts are provided by aspartate 413, aspartate 424, glutamate 522, and glutamate 536.

The protein belongs to the peptidase M24B family. Mn(2+) serves as cofactor.

It carries out the reaction Release of any N-terminal amino acid, including proline, that is linked to proline, even from a dipeptide or tripeptide.. Its function is as follows. Catalyzes the removal of a penultimate prolyl residue from the N-termini of peptides. The sequence is that of Probable Xaa-Pro aminopeptidase P (AMPP) from Paracoccidioides lutzii (strain ATCC MYA-826 / Pb01) (Paracoccidioides brasiliensis).